The sequence spans 448 residues: Proline iminopeptidase aneH (448 aa).

The 128-residue stretch at 64 to 191 (PWMLYLQGGP…VEVFIGGGPC (128 aa)) folds into the AB hydrolase-1 domain. The active-site Nucleophile is Ser164. The active site involves Asp397. His425 serves as the catalytic Proton donor.

The protein belongs to the peptidase S33 family. In terms of assembly, homooligomer.

The protein resides in the cytoplasm. It carries out the reaction Release of N-terminal proline from a peptide.. Its pathway is secondary metabolite biosynthesis. Its function is as follows. Proline iminopeptidase; part of the gene cluster that mediates the biosynthesis of aculenes, a unique type of norsesquiterpenes that contain a nordaucane skeleton linked to an L-proline moiety and are of mixed biosynthetic origin. The pathway begins with the synthesis of dauca-4,7-diene by the terpene cyclase aneC using farnesyl pyrophosphate (FPP) as substrate. The cytochrome P450 monooxygenase aneF then performs the initial oxidation at C-12 of dauca-4,7-diene to yield asperaculane D. Asperaculane D is substrate of the cytochrome P450 monooxygenase aneD for C-10 hydroxylation to yield asperaculane E. The cytochrome P450 monooxygenase aneG then converts asperaculane E into aculene D via C-2 oxidation. The monomodular nonribosomal peptide synthtase aneB adenylates L-proline and the thiohydrolase aneE transfers this activated L-proline derivative to aculenes D and C to produce respectively aculenes B and A. The dioxygenase aneA converts aculene D into aculene C, and aculene B into aculene A by introducing the 5,6-alkene moiety. Asperculanes A, B, C and F, as well as 14-prolyl asperculane C, might be shunt products of the pathway. The sequence is that of Proline iminopeptidase aneH from Aspergillus aculeatus (strain ATCC 16872 / CBS 172.66 / WB 5094).